The chain runs to 550 residues: Hydroxylamine reductase (550 aa).

The [2Fe-2S] cluster site is built by cysteine 3, cysteine 6, cysteine 18, and cysteine 25. Positions 249, 273, 317, 405, 433, 458, 492, and 494 each coordinate hybrid [4Fe-2O-2S] cluster. Cysteine 405 is modified (cysteine persulfide).

This sequence belongs to the HCP family. Requires [2Fe-2S] cluster as cofactor. Hybrid [4Fe-2O-2S] cluster serves as cofactor.

It is found in the cytoplasm. The enzyme catalyses A + NH4(+) + H2O = hydroxylamine + AH2 + H(+). Functionally, catalyzes the reduction of hydroxylamine to form NH(3) and H(2)O. This chain is Hydroxylamine reductase, found in Escherichia coli (strain SMS-3-5 / SECEC).